The chain runs to 226 residues: Thiocyanate methyltransferase 1 (226 aa).

S-adenosyl-L-methionine contacts are provided by Trp35, Trp39, Trp46, and Gly73. A Phosphoserine modification is found at Ser85. S-adenosyl-L-methionine is bound by residues Asp94, 122 to 123 (DF), and Tyr138.

Belongs to the class I-like SAM-binding methyltransferase superfamily. TPMT family. In terms of tissue distribution, ubiquitous.

It catalyses the reaction thiocyanate + S-adenosyl-L-methionine = methyl thiocyanate + S-adenosyl-L-homocysteine. Its function is as follows. S-adenosyl-L-methionine-dependent methyltransferase. Probably involved in glucosinolate metabolism and defense against phytopathogens. Highly reactive to thiocyanate (NCS(-)) derived from myrosinase-mediated hydrolysis of glucosinolates upon tissue damage. Also accepts halid ions as substrates with a lower affinity. This chain is Thiocyanate methyltransferase 1 (TMT1), found in Brassica oleracea (Wild cabbage).